The primary structure comprises 375 residues: Probable disease resistance protein At1g52660 (375 aa).

In terms of domain architecture, NB-ARC spans 158-372; sequence ENTGIIGLYG…LSNSPPNFSG (215 aa). 167 to 174 is an ATP binding site; sequence GVEGVGKT.

Possible disease resistance protein. The sequence is that of Probable disease resistance protein At1g52660 from Arabidopsis thaliana (Mouse-ear cress).